The primary structure comprises 175 residues: Alkyl hydroperoxide reductase AhpD (175 aa).

The active-site Proton donor is the C130. Residues C130 and C133 are joined by a disulfide bond. The active-site Cysteine sulfenic acid (-SOH) intermediate is C133.

This sequence belongs to the AhpD family. As to quaternary structure, homotrimer.

It catalyses the reaction N(6)-[(R)-dihydrolipoyl]-L-lysyl-[lipoyl-carrier protein] + a hydroperoxide = N(6)-[(R)-lipoyl]-L-lysyl-[lipoyl-carrier protein] + an alcohol + H2O. In terms of biological role, antioxidant protein with alkyl hydroperoxidase activity. Required for the reduction of the AhpC active site cysteine residues and for the regeneration of the AhpC enzyme activity. The polypeptide is Alkyl hydroperoxide reductase AhpD (Mycobacteroides abscessus (strain ATCC 19977 / DSM 44196 / CCUG 20993 / CIP 104536 / JCM 13569 / NCTC 13031 / TMC 1543 / L948) (Mycobacterium abscessus)).